A 454-amino-acid polypeptide reads, in one-letter code: Tryptophanase (454 aa).

K256 is subject to N6-(pyridoxal phosphate)lysine.

It belongs to the beta-eliminating lyase family. As to quaternary structure, homotetramer. Pyridoxal 5'-phosphate serves as cofactor.

It carries out the reaction L-tryptophan + H2O = indole + pyruvate + NH4(+). It participates in amino-acid degradation; L-tryptophan degradation via pyruvate pathway; indole and pyruvate from L-tryptophan: step 1/1. The polypeptide is Tryptophanase (Hyphomonas neptunium (strain ATCC 15444)).